The sequence spans 220 residues: Charged multivesicular body protein 3 (220 aa).

Gly-2 carries N-myristoyl glycine lipidation. Residues 22-54 (KIRKEMRVIDRQIRDIQREQEKVKRSIKESAKK) adopt a coiled-coil conformation. Residues 168 to 169 (IL) are important for autoinhibitory function. Residues 181–220 (PSKVTDALPEPEITGAMAASDEEEEEDLEAMHSRLAALRS) form a disordered region. Positions 201-209 (DEEEEEDLE) match the MIT-interacting motif motif. 2 interaction with STAMBP regions span residues 203–207 (EEEED) and 219–220 (RS).

It belongs to the SNF7 family. In terms of assembly, probable core component of the endosomal sorting required for transport complex III (ESCRT-III). ESCRT-III components are thought to multimerize to form a flat lattice on the perimeter membrane of the endosome. Several assembly forms of ESCRT-III may exist that interact and act sequentially.

It localises to the cytoplasm. Its subcellular location is the cytosol. The protein localises to the membrane. The protein resides in the endosome. It is found in the late endosome membrane. Probable core component of the endosomal sorting required for transport complex III (ESCRT-III) which is involved in multivesicular bodies (MVBs) formation and sorting of endosomal cargo proteins into MVBs. MVBs contain intraluminal vesicles (ILVs) that are generated by invagination and scission from the limiting membrane of the endosome and mostly are delivered to lysosomes enabling degradation of membrane proteins, such as stimulated growth factor receptors, lysosomal enzymes and lipids. Involved in late stages of cytokinesis. Plays a role in endosomal sorting/trafficking of EGF receptor. The polypeptide is Charged multivesicular body protein 3 (chmp3) (Xenopus laevis (African clawed frog)).